The following is a 465-amino-acid chain: Argininosuccinate lyase (465 aa).

It belongs to the lyase 1 family. Argininosuccinate lyase subfamily.

It is found in the cytoplasm. It catalyses the reaction 2-(N(omega)-L-arginino)succinate = fumarate + L-arginine. The protein operates within amino-acid biosynthesis; L-arginine biosynthesis; L-arginine from L-ornithine and carbamoyl phosphate: step 3/3. In Methanosphaera stadtmanae (strain ATCC 43021 / DSM 3091 / JCM 11832 / MCB-3), this protein is Argininosuccinate lyase.